A 468-amino-acid chain; its full sequence is Glutamate--tRNA ligase (468 aa).

The short motif at 9–19 (PSPTGYLHVGG) is the 'HIGH' region element. Zn(2+) is bound by residues Cys98, Cys100, Cys125, and Asp127. A 'KMSKS' region motif is present at residues 235-239 (KLSKR). Lys238 lines the ATP pocket.

The protein belongs to the class-I aminoacyl-tRNA synthetase family. Glutamate--tRNA ligase type 1 subfamily. Monomer. Requires Zn(2+) as cofactor.

It is found in the cytoplasm. The catalysed reaction is tRNA(Glu) + L-glutamate + ATP = L-glutamyl-tRNA(Glu) + AMP + diphosphate. In terms of biological role, catalyzes the attachment of glutamate to tRNA(Glu) in a two-step reaction: glutamate is first activated by ATP to form Glu-AMP and then transferred to the acceptor end of tRNA(Glu). The protein is Glutamate--tRNA ligase of Idiomarina loihiensis (strain ATCC BAA-735 / DSM 15497 / L2-TR).